A 164-amino-acid polypeptide reads, in one-letter code: 6,7-dimethyl-8-ribityllumazine synthase (164 aa).

Residues Phe-22, 56-58 (AWE), and 80-82 (AVI) each bind 5-amino-6-(D-ribitylamino)uracil. Position 85-86 (85-86 (DT)) interacts with (2S)-2-hydroxy-3-oxobutyl phosphate. The active-site Proton donor is His-88. Residue Leu-113 coordinates 5-amino-6-(D-ribitylamino)uracil. Arg-127 is a (2S)-2-hydroxy-3-oxobutyl phosphate binding site.

The protein belongs to the DMRL synthase family.

The enzyme catalyses (2S)-2-hydroxy-3-oxobutyl phosphate + 5-amino-6-(D-ribitylamino)uracil = 6,7-dimethyl-8-(1-D-ribityl)lumazine + phosphate + 2 H2O + H(+). Its pathway is cofactor biosynthesis; riboflavin biosynthesis; riboflavin from 2-hydroxy-3-oxobutyl phosphate and 5-amino-6-(D-ribitylamino)uracil: step 1/2. Its function is as follows. Catalyzes the formation of 6,7-dimethyl-8-ribityllumazine by condensation of 5-amino-6-(D-ribitylamino)uracil with 3,4-dihydroxy-2-butanone 4-phosphate. This is the penultimate step in the biosynthesis of riboflavin. The polypeptide is 6,7-dimethyl-8-ribityllumazine synthase (Gemmatimonas aurantiaca (strain DSM 14586 / JCM 11422 / NBRC 100505 / T-27)).